The sequence spans 986 residues: E3 ubiquitin-protein ligase Arkadia (986 aa).

Glycyl lysine isopeptide (Lys-Gly) (interchain with G-Cter in SUMO2) cross-links involve residues Lys19, Lys28, Lys34, Lys47, Lys59, Lys73, Lys87, Lys96, and Lys110. Residues 66-89 (HLCDDSQKQEKDMNGNQQEQEKSL) are compositionally biased toward basic and acidic residues. A disordered region spans residues 66–106 (HLCDDSQKQEKDMNGNQQEQEKSLVVRKKRKSQQAGPSYVQ). A disordered region spans residues 120 to 191 (QHLGTPSDED…HKWPRTETES (72 aa)). The segment covering 132 to 151 (SSFSDCLSSPSSSLHFGDSD) has biased composition (low complexity). Over residues 164–173 (RHSQTILNAK) the composition is skewed to polar residues. Lys173 is covalently cross-linked (Glycyl lysine isopeptide (Lys-Gly) (interchain with G-Cter in SUMO2)). Positions 174–184 (SRSHSARSHKW) are enriched in basic residues. Residues Lys198 and Lys218 each participate in a glycyl lysine isopeptide (Lys-Gly) (interchain with G-Cter in SUMO2) cross-link. Residues 241 to 404 (VLARRKYALL…VPTTSARMES (164 aa)) are interaction with AXIN1. The interval 248 to 277 (ALLPSSSSSSENDLSSESSSSSSTEGEEDL) is disordered. The span at 252 to 271 (SSSSSSENDLSSESSSSSST) shows a compositional bias: low complexity. An SUMO interaction motif 1 (SIM) motif is present at residues 300–304 (VVVIE). Positions 325-331 (EVEIVTV) match the SUMO interaction motif 2 (SIM) motif. The disordered stretch occupies residues 337–373 (SRSTLGHSRSHWSQGSSSHASRPQEPRNRSRISTVIQ). Residues 347–357 (HWSQGSSSHAS) are compositionally biased toward low complexity. The SUMO interaction motif 3 (SIM) signature appears at 382–386 (VVDLT). Disordered stretches follow at residues 389-471 (EDEP…ETGP), 506-561 (QQHG…SYHE), 610-646 (APSQ…RHYM), 659-684 (HQAS…VDYV), and 696-719 (ISSH…TAAP). Positions 395–466 (VPTTSARMES…DSRRTTSSAV (72 aa)) are enriched in polar residues. Basic residues predominate over residues 508-522 (HGHHFQHHHHHHHTP). Over residues 551-561 (ANSSSGTSYHE) the composition is skewed to polar residues. A compositionally biased stretch (pro residues) spans 670–680 (NPPPQTQPPPQ). The ubiquitin binding stretch occupies residues 907–909 (YPH). Glycyl lysine isopeptide (Lys-Gly) (interchain with G-Cter in SUMO2) cross-links involve residues Lys915 and Lys919. Positions 934 and 937 each coordinate Zn(2+). An RING-type; atypical zinc finger spans residues 934 to 975 (CTICLSILEEGEDVRRLPCMHLFHQVCVDQWLITNKKCPICR). The tract at residues 949 to 953 (RLPCM) is ubiquitin binding. Zn(2+) contacts are provided by His957 and Cys960.

This sequence belongs to the Arkadia family. In terms of assembly, monomer. Interacts with SMAD6, SMAD7, AXIN1, AXIN2 and SKIL isoform SNON. Interacts with (phosphorylated) SMAD2 and SMAD3. Part of a complex containing RNF111, AXIN1 and SMAD7. Interacts (via SIM domains) with SUMO1 and SUMO2.

The protein localises to the nucleus. The protein resides in the cytoplasm. It localises to the PML body. The catalysed reaction is S-ubiquitinyl-[E2 ubiquitin-conjugating enzyme]-L-cysteine + [acceptor protein]-L-lysine = [E2 ubiquitin-conjugating enzyme]-L-cysteine + N(6)-ubiquitinyl-[acceptor protein]-L-lysine.. Its pathway is protein modification; protein ubiquitination. Its activity is regulated as follows. Binds free ubiquitin non-covalently via its RING-type zinc finger. Ubiquitin-binding leads to enhance the E3 ubiquitin-protein ligase activity by stabilizing the ubiquitin-conjugating enzyme E2 (donor ubiquitin) in the 'closed' conformation and activating ubiquitin transfer. Its function is as follows. E3 ubiquitin-protein ligase. Required for mesoderm patterning during embryonic development. Acts as an enhancer of the transcriptional responses of the SMAD2/SMAD3 effectors, which are activated downstream of BMP. Acts by mediating ubiquitination and degradation of SMAD inhibitors such as SMAD7, inducing their proteasomal degradation and thereby enhancing the transcriptional activity of TGF-beta and BMP. In addition to enhance transcription of SMAD2/SMAD3 effectors, also regulates their turnover by mediating their ubiquitination and subsequent degradation, coupling their activation with degradation, thereby ensuring that only effectors 'in use' are degraded. Activates SMAD3/SMAD4-dependent transcription by triggering signal-induced degradation of SNON isoform of SKIL. Associates with UBE2D2 as an E2 enzyme. Specifically binds polysumoylated chains via SUMO interaction motifs (SIMs) and mediates ubiquitination of sumoylated substrates. Catalyzes 'Lys-63'-linked ubiquitination of sumoylated XPC in response to UV irradiation, promoting nucleotide excision repair. Mediates ubiquitination and degradation of sumoylated PML. The regulation of the BMP-SMAD signaling is however independent of sumoylation and is not dependent of SUMO interaction motifs (SIMs). This is E3 ubiquitin-protein ligase Arkadia (RNF111) from Pongo abelii (Sumatran orangutan).